The sequence spans 739 residues: MLFSKSGRTIFPLLPPYGVQDPNGVQGRVIPVHPDGSTPYLGLRARLSQVWLNRWTVLLLLVLARVLMAASSIKTDMNRAKSEALSACTSVESMGDAMVSMPHYLAEGVNELTADGVNAAIDGLKMLLMLTLTGVEELVIFFVKVMYQTYLCLFTLVVHGVVDVGLSLIEDVTDVLNSTVKTVAKDIAKVTETFEDDYNTLISKINGVASLFGGSVPTLNISSEIDKLENVQLSSSIDKDLQKINDSIPNFNEVMNFTENVIRFPFDEVKKLVNESLGNYTFNASALPVPAKKTLTFCDKNDGINSFFAGATDIILTARKIFIAILVVAAIIACVPMAWQEIRRWHTMKERSQLVRKEAHDPMDVVYIVSRPHTAAIGIKAASRFSNSRRQILVRWVIAYATSPAALFVLLLALAGLLSCLCQFILLSAVKRTVPELSNEVGDFAEEVVDVLQNTSAQWANDANKVIQNVDDELNDHVFGWVNTSTGALNDTLNTFVNKTIGVLNDTFGGTLLYEPLLDVFDCLVGLKVESVQKGLTWVSDHAHIDFPLLPNDTFSRGAEGSLNSSDASESFLADAGDETSNKITEVVYKVISALEKALLIEVIIASCILLVWVINAMFGIIRALTLFWGRDKNRGEGGPAPPNSRPNPGSGPDSHGFIDVPLTSLPSHRDADETAARSQPAPRYEVATSQGSSAAVVSSELEYPDEKVGFAGQRNALRVDGVSDLRGSSYVEYGIEKY.

The Extracellular portion of the chain corresponds to 1-49 (MLFSKSGRTIFPLLPPYGVQDPNGVQGRVIPVHPDGSTPYLGLRARLSQ). Residues 50-70 (VWLNRWTVLLLLVLARVLMAA) form a helical membrane-spanning segment. The Cytoplasmic segment spans residues 71–149 (SSIKTDMNRA…IFFVKVMYQT (79 aa)). A helical transmembrane segment spans residues 150–169 (YLCLFTLVVHGVVDVGLSLI). At 170–320 (EDVTDVLNST…ATDIILTARK (151 aa)) the chain is on the extracellular side. N-linked (GlcNAc...) asparagine glycosylation is found at N177, N220, N245, N256, N274, N279, and N283. A helical membrane pass occupies residues 321–341 (IFIAILVVAAIIACVPMAWQE). Residues 342–395 (IRRWHTMKERSQLVRKEAHDPMDVVYIVSRPHTAAIGIKAASRFSNSRRQILVR) are Cytoplasmic-facing. The chain crosses the membrane as a helical span at residues 396 to 418 (WVIAYATSPAALFVLLLALAGLL). The Extracellular portion of the chain corresponds to 419 to 598 (SCLCQFILLS…YKVISALEKA (180 aa)). Residues N454, N483, N490, N498, N505, N552, and N564 are each glycosylated (N-linked (GlcNAc...) asparagine). Residues 599-619 (LLIEVIIASCILLVWVINAMF) traverse the membrane as a helical segment. Over 620–739 (GIIRALTLFW…SYVEYGIEKY (120 aa)) the chain is Cytoplasmic. The disordered stretch occupies residues 636–693 (GEGGPAPPNSRPNPGSGPDSHGFIDVPLTSLPSHRDADETAARSQPAPRYEVATSQGS).

It belongs to the PRM1 family.

The protein resides in the cell membrane. Functionally, involved in cell fusion during mating by stabilizing the plasma membrane fusion event. This chain is Plasma membrane fusion protein prm1 (prm1), found in Aspergillus niger (strain ATCC MYA-4892 / CBS 513.88 / FGSC A1513).